The following is a 136-amino-acid chain: Nucleoside diphosphate kinase (136 aa).

ATP is bound by residues lysine 10, phenylalanine 58, arginine 86, threonine 92, arginine 104, and asparagine 114. Catalysis depends on histidine 117, which acts as the Pros-phosphohistidine intermediate.

The protein belongs to the NDK family. In terms of assembly, homotetramer. Mg(2+) serves as cofactor.

The protein localises to the cytoplasm. The enzyme catalyses a 2'-deoxyribonucleoside 5'-diphosphate + ATP = a 2'-deoxyribonucleoside 5'-triphosphate + ADP. It catalyses the reaction a ribonucleoside 5'-diphosphate + ATP = a ribonucleoside 5'-triphosphate + ADP. Functionally, major role in the synthesis of nucleoside triphosphates other than ATP. The ATP gamma phosphate is transferred to the NDP beta phosphate via a ping-pong mechanism, using a phosphorylated active-site intermediate. The polypeptide is Nucleoside diphosphate kinase (Mycobacterium ulcerans (strain Agy99)).